A 410-amino-acid chain; its full sequence is Putative F-box/kelch-repeat protein At1g15680 (410 aa).

Residues 13–58 form the F-box domain; sequence CKRRIELPEELLAEIVARLPFISITRFKSVCKGWRSLIESTYFRHL. Kelch repeat units lie at residues 177–227 and 274–327; these read VVCM…SLKK and AYTT…YFPV.

In Arabidopsis thaliana (Mouse-ear cress), this protein is Putative F-box/kelch-repeat protein At1g15680.